Here is a 105-residue protein sequence, read N- to C-terminus: Small ribosomal subunit protein uS10 (105 aa).

This sequence belongs to the universal ribosomal protein uS10 family. As to quaternary structure, part of the 30S ribosomal subunit.

Functionally, involved in the binding of tRNA to the ribosomes. This Acaryochloris marina (strain MBIC 11017) protein is Small ribosomal subunit protein uS10.